Consider the following 182-residue polypeptide: ADP-ribosylation factor 1 (182 aa).

Gly2 carries N-myristoyl glycine lipidation. Residues 24 to 31, 67 to 71, and 126 to 129 each bind GTP; these read GLDAAGKT, DVGGQ, and NKQD.

This sequence belongs to the small GTPase superfamily. Arf family.

The protein localises to the golgi apparatus. It catalyses the reaction GTP + H2O = GDP + phosphate + H(+). In terms of biological role, GTP-binding protein involved in protein trafficking; may modulate vesicle budding and uncoating within the Golgi apparatus. This is ADP-ribosylation factor 1 (arfA) from Dictyostelium discoideum (Social amoeba).